The following is a 138-amino-acid chain: MNTIHVDVVSAEESIFSGEARFVALPGEAGELGIYPRHTPLITRIRPGAVRIEKADGTEEFVFVAGGLLEVQPNCVTVLSDTAIRGKDLDEAKATAAKALAEEALKNAKNDIDIAMAQSELAVMAAQIAALRKYRQKK.

Belongs to the ATPase epsilon chain family. In terms of assembly, F-type ATPases have 2 components, CF(1) - the catalytic core - and CF(0) - the membrane proton channel. CF(1) has five subunits: alpha(3), beta(3), gamma(1), delta(1), epsilon(1). CF(0) has three main subunits: a, b and c.

The protein localises to the cell inner membrane. Produces ATP from ADP in the presence of a proton gradient across the membrane. In Polaromonas naphthalenivorans (strain CJ2), this protein is ATP synthase epsilon chain.